The following is a 264-amino-acid chain: S-adenosylmethionine decarboxylase proenzyme (264 aa).

Residue Ser112 is the Schiff-base intermediate with substrate; via pyruvic acid of the active site. Position 112 is a pyruvic acid (Ser); by autocatalysis (Ser112). Catalysis depends on His117, which acts as the Proton acceptor; for processing activity. Residue Cys140 is the Proton donor; for catalytic activity of the active site.

This sequence belongs to the prokaryotic AdoMetDC family. Type 2 subfamily. As to quaternary structure, heterooctamer of four alpha and four beta chains arranged as a tetramer of alpha/beta heterodimers. Requires pyruvate as cofactor. In terms of processing, is synthesized initially as an inactive proenzyme. Formation of the active enzyme involves a self-maturation process in which the active site pyruvoyl group is generated from an internal serine residue via an autocatalytic post-translational modification. Two non-identical subunits are generated from the proenzyme in this reaction, and the pyruvate is formed at the N-terminus of the alpha chain, which is derived from the carboxyl end of the proenzyme. The post-translation cleavage follows an unusual pathway, termed non-hydrolytic serinolysis, in which the side chain hydroxyl group of the serine supplies its oxygen atom to form the C-terminus of the beta chain, while the remainder of the serine residue undergoes an oxidative deamination to produce ammonia and the pyruvoyl group blocking the N-terminus of the alpha chain.

It carries out the reaction S-adenosyl-L-methionine + H(+) = S-adenosyl 3-(methylsulfanyl)propylamine + CO2. The protein operates within amine and polyamine biosynthesis; S-adenosylmethioninamine biosynthesis; S-adenosylmethioninamine from S-adenosyl-L-methionine: step 1/1. Its function is as follows. Catalyzes the decarboxylation of S-adenosylmethionine to S-adenosylmethioninamine (dcAdoMet), the propylamine donor required for the synthesis of the polyamines spermine and spermidine from the diamine putrescine. This is S-adenosylmethionine decarboxylase proenzyme from Salmonella typhi.